The sequence spans 100 residues: Noncompact myelin-associated protein (100 aa).

The Extracellular portion of the chain corresponds to 1–28; the sequence is MTTATTLGDAVFSLNMTRGEDILYKSSG. Residues 29-49 traverse the membrane as a helical segment; sequence AIVAAIVVVVVIIVTLVLILL. Residues 50 to 100 lie on the Cytoplasmic side of the membrane; the sequence is KMYNRRMRTRRELEPKSPKPPVPPALDPNSNGSQQPAAVTSDPADVPVETR. The segment at 58–100 is disordered; the sequence is TRRELEPKSPKPPVPPALDPNSNGSQQPAAVTSDPADVPVETR. The segment covering 77 to 87 has biased composition (polar residues); sequence PNSNGSQQPAA.

Post-translationally, glycosylated. As to expression, expressed in the peripheral nervous system Schwann cells (at protein level).

The protein localises to the cell membrane. In terms of biological role, plays a role in myelin formation. This is Noncompact myelin-associated protein (Ncmap) from Rattus norvegicus (Rat).